Consider the following 383-residue polypeptide: NAD(P) transhydrogenase subunit alpha part 1 (383 aa).

Residues 131 to 134 (QNMD), valine 181, 201 to 203 (DVR), and glycine 231 each bind NAD(+).

Belongs to the AlaDH/PNT family. As to quaternary structure, heterotrimer of two alpha chains and a beta (PntB) chain; in Rickettsia, the alpha chain is made of two subunits (PntAA and PntAB) and forms a dimer.

It carries out the reaction NAD(+) + NADPH + H(+)(in) = NADH + NADP(+) + H(+)(out). The transhydrogenation between NADH and NADP is coupled to respiration and ATP hydrolysis and functions as a proton pump across the membrane. The protein is NAD(P) transhydrogenase subunit alpha part 1 (pntAA) of Rickettsia prowazekii (strain Madrid E).